Reading from the N-terminus, the 149-residue chain is UPF0336 protein Lxx02810 (149 aa).

The protein belongs to the UPF0336 family.

This Leifsonia xyli subsp. xyli (strain CTCB07) protein is UPF0336 protein Lxx02810.